The sequence spans 51 residues: Insulin-2 (51 aa).

Disulfide bonds link cysteine 8–cysteine 37, cysteine 20–cysteine 50, and cysteine 36–cysteine 41.

Belongs to the insulin family. In terms of assembly, heterodimer of a B chain and an A chain linked by two disulfide bonds.

The protein localises to the secreted. In terms of biological role, insulin decreases blood glucose concentration. It increases cell permeability to monosaccharides, amino acids and fatty acids. It accelerates glycolysis, the pentose phosphate cycle, and glycogen synthesis in liver. The polypeptide is Insulin-2 (Katsuwonus pelamis (Skipjack tuna)).